We begin with the raw amino-acid sequence, 1482 residues long: Cystic fibrosis transmembrane conductance regulator (1482 aa).

Over 1–77 (MQRSPLEKAS…KLINALRRCF (77 aa)) the chain is Cytoplasmic. The chain crosses the membrane as a helical span at residues 78 to 98 (FWRFMFYGILLYLGEVTKAVQ). The ABC transmembrane type-1 1 domain maps to 81–365 (FMFYGILLYL…WAVQTWYDSL (285 aa)). Residues 99–122 (PLLLGRIIASYDPDNKVERSIAIY) are Extracellular-facing. Residues 123–146 (LGIGLCLLFIVRTLLLHPAIFGLH) traverse the membrane as a helical segment. Residues 147–195 (HIGMQMRIAMFSLIYKKILKLSSRVLDKISIGQLVSLLSNNLNKFDEGL) lie on the Cytoplasmic side of the membrane. Residues 196–216 (ALAHFVWIAPLQVTLLMGLLW) traverse the membrane as a helical segment. The Extracellular portion of the chain corresponds to 217–222 (ELLQAS). Residues 223-243 (AFCGLGFLIVLALVQAGLGRM) traverse the membrane as a helical segment. The Cytoplasmic segment spans residues 244–298 (MMKYRDQRAGKINERLVITSEMIENIQSVKAYCWEEAMEKMIENLRQTELKLTRK). The helical transmembrane segment at 299-319 (AAYVRYFNSSAFFFSGFFVVF) threads the bilayer. Topologically, residues 320-339 (LSVLPYALIKGIILRKIFTT) are extracellular. A helical membrane pass occupies residues 340-358 (ISFCIVLRMAVTRQFPWAV). Topologically, residues 359-859 (QTWYDSLGAI…YLRYLAVNKS (501 aa)) are cytoplasmic. Residues Trp-401, 458–465 (GSTGAGKT), and Gln-493 each bind ATP. The ABC transporter 1 domain occupies 423–646 (NGDNSLFFSN…RPDFSSKLMG (224 aa)). Residue Cys-524 is the site of S-palmitoyl cysteine attachment. A phosphoserine mark is found at Ser-549 and Ser-660. Residues 654–832 (SAERRNSILT…EEINEEYLKE (179 aa)) are disordered R region. Phosphoserine; by PKA is present on Ser-670. Phosphoserine is present on Ser-686. Lys-688 is covalently cross-linked (Glycyl lysine isopeptide (Lys-Gly) (interchain with G-Cter in ubiquitin)). Phosphoserine occurs at positions 700 and 712. Position 717 is a phosphothreonine (Thr-717). Residues Ser-738, Ser-769, Ser-791, Ser-796, and Ser-814 each carry the phosphoserine modification. The helical transmembrane segment at 860–880 (LSLVLIWCLVIFLAEVAISLA) threads the bilayer. The 297-residue stretch at 860–1156 (LSLVLIWCLV…AVNSSIDVDS (297 aa)) folds into the ABC transmembrane type-1 2 domain. At 881–919 (VLLLLDKSPRYSKGNGTASGNGSSAVIITSTSSYYLFYI) the chain is on the extracellular side. N-linked (GlcNAc...) asparagine glycans are attached at residues Asn-895 and Asn-901. A discontinuously helical transmembrane segment spans residues 920 to 940 (YVGVADTLLALGFFRGLPLVH). Residues 941–991 (TLITVSKILHHRMLHSVLRAPMSTLNMLKAGGILNRFSKDIAILDDLLPLT) are Cytoplasmic-facing. A helical transmembrane segment spans residues 992–1012 (IFDFVQLLLIVIGAVAVVSVL). Residues 1013–1014 (QP) are Extracellular-facing. The helical transmembrane segment at 1015 to 1035 (YIFLATVPVIAAFVILRGYFL) threads the bilayer. At 1036 to 1096 (HTSQQLKQLE…TANWFLYLST (61 aa)) the chain is on the cytoplasmic side. A helical transmembrane segment spans residues 1097–1117 (LRWFQMRIEMIFVVFFIAVTF). At 1118 to 1131 (ISILTTGEGEGTVG) the chain is on the extracellular side. Residues 1132 to 1152 (IILTLAMNIMGTLQWAVNSSI) traverse the membrane as a helical segment. The Cytoplasmic portion of the chain corresponds to 1153 to 1482 (DVDSLMRSVS…TEEEVQETRL (330 aa)). Positions 1212–1445 (MTVKDLTARY…KSLFRQAISP (234 aa)) constitute an ABC transporter 2 domain. ATP contacts are provided by residues Tyr-1221 and 1246-1253 (GRTGAGKS). Residues 1388–1482 (RTLKQAFADC…TEEEVQETRL (95 aa)) are interaction with GORASP2. The S-palmitoyl cysteine moiety is linked to residue Cys-1397. Phosphoserine is present on residues Ser-1446 and Ser-1458. The tract at residues 1450 to 1482 (KLFPRRNSSKHKSRSPITALKEETEEEVQETRL) is disordered. Residues 1451–1463 (LFPRRNSSKHKSR) show a composition bias toward basic residues. The span at 1472 to 1482 (ETEEEVQETRL) shows a compositional bias: acidic residues. A PDZ-binding motif is present at residues 1480-1482 (TRL).

Belongs to the ABC transporter superfamily. ABCC family. CFTR transporter (TC 3.A.1.202) subfamily. Monomer; does not require oligomerization for channel activity. May form oligomers in the membrane. Interacts with SLC26A3, SLC26A6 and NHERF1. Interacts with SHANK2. Interacts with MYO6. Interacts (via C-terminus) with GOPC (via PDZ domain); this promotes CFTR internalization and thereby decreases channel activity. Interacts with SLC4A7 through NHERF1. Found in a complex with MYO5B and RAB11A. Interacts with ANO1. Interacts with SLC26A8. Interacts with AHCYL1; the interaction increases CFTR activity. Interacts with CSE1L. The core-glycosylated form interacts with GORASP2 (via PDZ GRASP-type 1 domain) in respone to ER stress. Interacts with MARCHF2; the interaction leads to CFTR ubiqtuitination and degradation. Interacts with ADGRG2. In terms of processing, N-glycosylated. Phosphorylated; cAMP treatment promotes phosphorylation and activates the channel. Dephosphorylation decreases the ATPase activity (in vitro). Phosphorylation at PKA sites activates the channel. Phosphorylation at PKC sites enhances the response to phosphorylation by PKA. Phosphorylated by AMPK; this inhibits channel activity. Post-translationally, ubiquitinated, leading to its degradation in the lysosome. Deubiquitination by USP10 in early endosomes enhances its endocytic recycling to the cell membrane. Ubiquitinated by RNF185 during ER stress. Ubiquitinated by MARCHF2.

It localises to the apical cell membrane. The protein resides in the early endosome membrane. It is found in the cell membrane. The protein localises to the recycling endosome membrane. Its subcellular location is the endoplasmic reticulum membrane. It localises to the nucleus. It carries out the reaction ATP + H2O + closed Cl(-) channel = ADP + phosphate + open Cl(-) channel.. The catalysed reaction is chloride(in) = chloride(out). It catalyses the reaction hydrogencarbonate(in) = hydrogencarbonate(out). The enzyme catalyses ATP + H2O = ADP + phosphate + H(+). Epithelial ion channel that plays an important role in the regulation of epithelial ion and water transport and fluid homeostasis. Mediates the transport of chloride ions across the cell membrane. Possesses an intrinsic ATPase activity and utilizes ATP to gate its channel; the passive flow of anions through the channel is gated by cycles of ATP binding and hydrolysis by the ATP-binding domains. The ion channel is also permeable to HCO(3)(-); selectivity depends on the extracellular chloride concentration. Exerts its function also by modulating the activity of other ion channels and transporters. Contributes to the regulation of the pH and the ion content of the epithelial fluid layer. Modulates the activity of the epithelial sodium channel (ENaC) complex, in part by regulating the cell surface expression of the ENaC complex. May regulate bicarbonate secretion and salvage in epithelial cells by regulating the transporter SLC4A7. Can inhibit the chloride channel activity of ANO1. Plays a role in the chloride and bicarbonate homeostasis during sperm epididymal maturation and capacitation. The polypeptide is Cystic fibrosis transmembrane conductance regulator (Otolemur garnettii (Small-eared galago)).